Reading from the N-terminus, the 216-residue chain is Ras-related protein Rab-5C (216 aa).

Positions 30, 31, 33, 34, 35, 36, 47, 48, 53, and 79 each coordinate GTP. Serine 35 lines the Mg(2+) pocket. 2 short sequence motifs (switch) span residues 45–57 (QFHE…IGAA) and 78–94 (AGQE…YRGA). Residue threonine 53 coordinates Mg(2+). Phosphoserine is present on serine 85. Positions 134, 135, 137, 165, and 166 each coordinate GTP. The segment at 185–216 (NEPQNAAGAPSRNRGVDLQENSPASRSQCCSN) is disordered. A compositionally biased stretch (polar residues) spans 203–216 (QENSPASRSQCCSN). 2 S-geranylgeranyl cysteine lipidation sites follow: cysteine 213 and cysteine 214.

This sequence belongs to the small GTPase superfamily. Rab family. As to quaternary structure, interacts with EEA1 and INCA1. Interacts with GDI1, GDI2, CHML and CHM; phosphorylation at Ser-85 disrupts this interaction. Mg(2+) serves as cofactor. Post-translationally, phosphorylation of Ser-85 in the switch II region by LRRK2 prevents the association of RAB regulatory proteins, including CHM, CHML and RAB GDP dissociation inhibitors GDI1 and GDI2.

It localises to the cell membrane. Its subcellular location is the early endosome membrane. The protein resides in the melanosome. The enzyme catalyses GTP + H2O = GDP + phosphate + H(+). Regulated by guanine nucleotide exchange factors (GEFs) which promote the exchange of bound GDP for free GTP. Regulated by GTPase activating proteins (GAPs) which increase the GTP hydrolysis activity. Inhibited by GDP dissociation inhibitors (GDIs). Its function is as follows. The small GTPases Rab are key regulators of intracellular membrane trafficking, from the formation of transport vesicles to their fusion with membranes. Rabs cycle between an inactive GDP-bound form and an active GTP-bound form that is able to recruit to membranes different sets of downstream effectors directly responsible for vesicle formation, movement, tethering and fusion. This Canis lupus familiaris (Dog) protein is Ras-related protein Rab-5C (RAB5C).